The following is a 376-amino-acid chain: Phosphoserine aminotransferase (376 aa).

Arg-46 provides a ligand contact to L-glutamate. Pyridoxal 5'-phosphate is bound by residues 80–81, Phe-104, Thr-150, Asp-172, and Gln-195; that span reads AT. Lys-196 is modified (N6-(pyridoxal phosphate)lysine). 247–248 is a pyridoxal 5'-phosphate binding site; the sequence is NT.

Belongs to the class-V pyridoxal-phosphate-dependent aminotransferase family. SerC subfamily. Homodimer. Pyridoxal 5'-phosphate is required as a cofactor.

The protein localises to the cytoplasm. The enzyme catalyses O-phospho-L-serine + 2-oxoglutarate = 3-phosphooxypyruvate + L-glutamate. The catalysed reaction is 4-(phosphooxy)-L-threonine + 2-oxoglutarate = (R)-3-hydroxy-2-oxo-4-phosphooxybutanoate + L-glutamate. It functions in the pathway amino-acid biosynthesis; L-serine biosynthesis; L-serine from 3-phospho-D-glycerate: step 2/3. Its pathway is cofactor biosynthesis; pyridoxine 5'-phosphate biosynthesis; pyridoxine 5'-phosphate from D-erythrose 4-phosphate: step 3/5. Functionally, catalyzes the reversible conversion of 3-phosphohydroxypyruvate to phosphoserine and of 3-hydroxy-2-oxo-4-phosphonooxybutanoate to phosphohydroxythreonine. This Corynebacterium glutamicum (strain R) protein is Phosphoserine aminotransferase.